The sequence spans 607 residues: Heterocyst differentiation ATP-binding protein HepA (607 aa).

In terms of domain architecture, ABC transmembrane type-1 spans 32–330; sequence AILAVIFSFL…INGTVAFLST (299 aa). 5 helical membrane passes run 33–53, 77–97, 163–182, 186–208, and 290–310; these read ILAV…IGFL, ILAA…LILL, FSGL…YFVV, ISWQ…LSTL, and IVIS…FFFV. Positions 364–598 constitute an ABC transporter domain; that stretch reads IDLVSVDFGY…RGKLWKYHQM (235 aa). Residue 397 to 404 participates in ATP binding; sequence GASGAGKT.

It belongs to the ABC transporter superfamily.

The protein resides in the cell inner membrane. In terms of biological role, acts early in the process of morphological differentiation of heterocysts. The protein is Heterocyst differentiation ATP-binding protein HepA (hepA) of Nostoc sp. (strain PCC 7120 / SAG 25.82 / UTEX 2576).